A 148-amino-acid polypeptide reads, in one-letter code: Small ribosomal subunit protein uS15 (148 aa).

The segment at 1–23 is disordered; that stretch reads MRKSKEKGRSGSTRPPQLKKPEW.

Belongs to the universal ribosomal protein uS15 family. As to quaternary structure, part of the 30S ribosomal subunit.

In Thermofilum pendens (strain DSM 2475 / Hrk 5), this protein is Small ribosomal subunit protein uS15.